The primary structure comprises 473 residues: Xylan O-acetyltransferase 14 (473 aa).

Residues 1–17 (MTTTGSTPPRKNRSNVT) are compositionally biased toward polar residues. Residues 1–22 (MTTTGSTPPRKNRSNVTGGEGG) form a disordered region. Residues 1 to 54 (MTTTGSTPPRKNRSNVTGGEGGSLEEYAWRAAGEAAAAKKATRAWGVSVSLRSH) lie on the Cytoplasmic side of the membrane. A helical; Signal-anchor for type II membrane protein membrane pass occupies residues 55 to 75 (FSSLVLLLLLLLVALAVSATT). The segment at 76–101 (KNGDPAETPHAPPLPPPASIKLPSSS) is disordered. Residues 76–473 (KNGDPAETPH…NQLLYAHIVS (398 aa)) are Lumenal-facing. Disulfide bonds link C108–C159, C130–C195, C139–C455, and C370–C451. Positions 182–184 (GDS) match the GDS motif motif. The Nucleophile role is filled by S184. 3 N-linked (GlcNAc...) asparagine glycosylation sites follow: N209, N223, and N414. D450 (proton donor) is an active-site residue. Residues 450–453 (DCIH) carry the DXXH motif motif. The active-site Proton acceptor is the H453.

It belongs to the PC-esterase family. TBL subfamily.

It localises to the golgi apparatus membrane. Functionally, xylan acetyltransferase required for 2-O- and 3-O-monoacetylation of xylosyl residues in xylan. Catalyzes the 2-O-acetylation of xylan, followed by nonenzymatic acetyl migration to the O-3 position, resulting in products that are monoacetylated at both O-2 and O-3 positions. The polypeptide is Xylan O-acetyltransferase 14 (Oryza sativa subsp. japonica (Rice)).